The sequence spans 31 residues: GTTVVAHKQQSVNRLLYKVTSHIPDTFFSLK.

Belongs to the tyrosinase family. Hemocyanin subfamily. As to expression, hemolymph.

Its subcellular location is the secreted. The protein localises to the extracellular space. Functionally, hemocyanins are copper-containing oxygen carriers occurring freely dissolved in the hemolymph of many mollusks and arthropods. The protein is Hemocyanin subunit 1 of Homarus americanus (American lobster).